Here is a 658-residue protein sequence, read N- to C-terminus: MLNSVSLTFPDGSVRDYDAAMTGAGLAESISKSLAKKAVAYAINGTVRDLSDPLGKSGKVEIITRDDARALELIRHDTAHVLAEAVQELWPGTQVTIGPVIENGFYYDFARNEPFTPDDFPVIEKKMREIIARNKPFTKEVWSRDKAKKVFADKGERYKLELIDAIPEDQDLKIYAQGDWFDLCRGPHMASTGQIGNAFKLMKVAGAYWRGDSNNPMLTRIYGTAWADQAQLEAYQTMLEEAEKRDHRKLGREMDLFHFQEEGPGVVFWHAKGWKMFQNLVNYMRRRLDEQGYQEVNAPQVLDKSLWETSGHWGWYRDAMFKVTVAGDDTDDDRVFALKPMNCPGHVQIFKHGLKSYRDLPVKLAEFGNVHRYEPSGALHGLMRVRGFTQDDAHIFCTEEQLASECLRINDLILSTYADFGFDEISVKLSTRPDKRVGTDEAWDHAEAIMGSVLETIRTRSGNRIKTSINPGEGAFYGPKFEYVLKDAIGREWQCGTTQVDFNLPERFGAFYIGSDSEKKQPVMVHRAICGSMERFLGILIENYSGHFPLWFAPQQVVVATITSEADGYATEVVAKLKAAGLLAEADLRNEKINYKVREHSLAKVPVILVCGKREAEEQTVNIRRLGSRDQESLGLAEAIAQLTEEAVTPDRRRKRAA.

The region spanning Met-1–Thr-64 is the TGS domain. Residues Asp-246 to Pro-549 form a catalytic region. Zn(2+) contacts are provided by Cys-343, His-394, and His-526.

This sequence belongs to the class-II aminoacyl-tRNA synthetase family. Homodimer. The cofactor is Zn(2+).

The protein localises to the cytoplasm. It catalyses the reaction tRNA(Thr) + L-threonine + ATP = L-threonyl-tRNA(Thr) + AMP + diphosphate + H(+). Functionally, catalyzes the attachment of threonine to tRNA(Thr) in a two-step reaction: L-threonine is first activated by ATP to form Thr-AMP and then transferred to the acceptor end of tRNA(Thr). Also edits incorrectly charged L-seryl-tRNA(Thr). In Mesorhizobium japonicum (strain LMG 29417 / CECT 9101 / MAFF 303099) (Mesorhizobium loti (strain MAFF 303099)), this protein is Threonine--tRNA ligase.